Reading from the N-terminus, the 610-residue chain is Elongation factor 4 (610 aa).

A tr-type G domain is found at 7–189 (SRIRNFSIIA…AIVQRIPPPK (183 aa)). GTP is bound by residues 19–24 (DHGKST) and 136–139 (NKID).

It belongs to the TRAFAC class translation factor GTPase superfamily. Classic translation factor GTPase family. LepA subfamily.

It localises to the cell inner membrane. It carries out the reaction GTP + H2O = GDP + phosphate + H(+). Functionally, required for accurate and efficient protein synthesis under certain stress conditions. May act as a fidelity factor of the translation reaction, by catalyzing a one-codon backward translocation of tRNAs on improperly translocated ribosomes. Back-translocation proceeds from a post-translocation (POST) complex to a pre-translocation (PRE) complex, thus giving elongation factor G a second chance to translocate the tRNAs correctly. Binds to ribosomes in a GTP-dependent manner. The protein is Elongation factor 4 of Thermus thermophilus (strain ATCC BAA-163 / DSM 7039 / HB27).